The sequence spans 195 residues: MLQPTQTSWVILAGGQASRMGGKDKGLIELNQKPLIEHVIERLSPQTPSILINANRNQDAYRAFGFVFSDQFKDFPGPMGGIHAGLVHAETDWVGFVPCDSPQINTDLVERFCNAVKEDTDILVAHDGDHQQPVFTLYHKRVLPKLTAFLERGDRKIILLYKECNTSYVDFSDSPNCFVNLNTPEELAQFGQLES.

GTP is bound by residues 12 to 14 (LAG), Lys25, Asn53, Asp70, and Asp100. Position 100 (Asp100) interacts with Mg(2+).

The protein belongs to the MobA family. Monomer. It depends on Mg(2+) as a cofactor.

Its subcellular location is the cytoplasm. The catalysed reaction is Mo-molybdopterin + GTP + H(+) = Mo-molybdopterin guanine dinucleotide + diphosphate. In terms of biological role, transfers a GMP moiety from GTP to Mo-molybdopterin (Mo-MPT) cofactor (Moco or molybdenum cofactor) to form Mo-molybdopterin guanine dinucleotide (Mo-MGD) cofactor. This chain is Molybdenum cofactor guanylyltransferase, found in Vibrio campbellii (strain ATCC BAA-1116).